Reading from the N-terminus, the 447-residue chain is Cysteine--tRNA ligase (447 aa).

A Zn(2+)-binding site is contributed by Cys28. The 'HIGH' region signature appears at Pro30–Asn40. Residues Cys211, His236, and Glu240 each coordinate Zn(2+). Residues Lys268–Ser272 carry the 'KMSKS' region motif. Residue Lys271 coordinates ATP.

It belongs to the class-I aminoacyl-tRNA synthetase family. In terms of assembly, monomer. Zn(2+) is required as a cofactor.

Its subcellular location is the cytoplasm. It carries out the reaction tRNA(Cys) + L-cysteine + ATP = L-cysteinyl-tRNA(Cys) + AMP + diphosphate. The sequence is that of Cysteine--tRNA ligase from Streptococcus agalactiae serotype Ia (strain ATCC 27591 / A909 / CDC SS700).